A 244-amino-acid chain; its full sequence is Phosphoribosyl isomerase A (244 aa).

D10 serves as the catalytic Proton acceptor. Catalysis depends on D129, which acts as the Proton donor.

It belongs to the HisA/HisF family.

The protein localises to the cytoplasm. It carries out the reaction 1-(5-phospho-beta-D-ribosyl)-5-[(5-phospho-beta-D-ribosylamino)methylideneamino]imidazole-4-carboxamide = 5-[(5-phospho-1-deoxy-D-ribulos-1-ylimino)methylamino]-1-(5-phospho-beta-D-ribosyl)imidazole-4-carboxamide. The catalysed reaction is N-(5-phospho-beta-D-ribosyl)anthranilate = 1-(2-carboxyphenylamino)-1-deoxy-D-ribulose 5-phosphate. It functions in the pathway amino-acid biosynthesis; L-histidine biosynthesis; L-histidine from 5-phospho-alpha-D-ribose 1-diphosphate: step 4/9. Its pathway is amino-acid biosynthesis; L-tryptophan biosynthesis; L-tryptophan from chorismate: step 3/5. Involved in both the histidine and tryptophan biosynthetic pathways. This chain is Phosphoribosyl isomerase A (priA), found in Mycobacterium tuberculosis (strain CDC 1551 / Oshkosh).